The sequence spans 304 residues: Murein tetrapeptide carboxypeptidase (304 aa).

Catalysis depends on Ser106, which acts as the Nucleophile. Catalysis depends on charge relay system residues Glu200 and His270.

It belongs to the peptidase S66 family.

Its subcellular location is the cytoplasm. The enzyme catalyses N-acetyl-D-glucosaminyl-N-acetylmuramoyl-L-alanyl-meso-2,6-diaminoheptanedioyl-D-alanine + H2O = N-acetyl-D-glucosaminyl-N-acetylmuramoyl-L-alanyl-meso-2,6-diaminoheptanedioate + D-alanine. It participates in cell wall biogenesis; peptidoglycan recycling. Its function is as follows. Releases the terminal D-alanine residue from the cytoplasmic tetrapeptide recycling product L-Ala-gamma-D-Glu-meso-Dap-D-Ala. Can also cleave D-Ala from murein derivatives containing the tetrapeptide, i.e. MurNAc-tetrapeptide, UDP-MurNAc-tetrapeptide, GlcNAc-MurNAc-tetrapeptide, and GlcNAc-anhMurNAc-tetrapeptide. Does not act on murein sacculi or cross-linked muropeptides. The tripeptides produced by the LcdA reaction can then be reused as peptidoglycan building blocks; LcdA is thereby involved in murein recycling. In Escherichia coli O6:H1 (strain CFT073 / ATCC 700928 / UPEC), this protein is Murein tetrapeptide carboxypeptidase (ldcA).